Consider the following 1116-residue polypeptide: Disease resistance protein RGA5 (1116 aa).

Residues 1 to 177 (MDAPASFSLG…HHGVSANLVG (177 aa)) form a structured coiled coil (CC) domain region. In terms of domain architecture, NB-ARC spans 182–466 (KTKLNRWLSD…WSAEGFVSAN (285 aa)). LRR repeat units lie at residues 608–631 (LFQL…ISGL), 633–653 (YLET…LVHL), 654–675 (PNLL…GCMR), 677–701 (LRTL…ELTN), 732–755 (LSNL…DISS), 786–808 (LHKL…DNLT), 810–830 (LPSL…RFIF), 835–857 (LPVL…AGAM), and 858–882 (PNLQ…LFGI). The segment at 935 to 971 (EEESHPLEKQHHKREKGSSAGHGVLEKESVEDSEKNT) is disordered. The span at 958 to 971 (VLEKESVEDSEKNT) shows a compositional bias: basic and acidic residues. The HMA domain maps to 997 to 1066 (RTKIVVKVHM…KCGLAELLMV (70 aa)). The segment at 1000–1070 (IVVKVHMPCG…AELLMVELVE (71 aa)) is HMA-like domain.

The protein belongs to the disease resistance NB-LRR family. Forms homodimer or heterodimer with RGA4 through its coiled coil (CC) domain. Interacts with AVR1-Pia and AVR-CO39 through its C-terminal part containing the HMA-like domain. In terms of tissue distribution, expressed in leaves.

The protein localises to the cytoplasm. In terms of biological role, disease resistance (R) protein that recognizes the AVR-Pia and AVR1-CO39 effector avirulence proteins from M.oryzae. Resistance proteins guard the plant against pathogens that contain an appropriate avirulence protein via an indirect interaction with this avirulence protein. That triggers a defense system including the hypersensitive response, which restricts the pathogen growth. Contribution of RGA4 is required to recognize the effector avirulence proteins AVR-Pia and AVR1-CO39 from M.oryzae. Acts as a repressor of the RGA4-mediated cell death activation. Upon infection, recognition and binding of the AVR effectors relieve the RGA5-mediated repression and triggers the hypersensitive response. Immune response triggered by the RGA4-RGA5 -mediated recognition of AVR1-CO39 confers resistance to X.oryzae pathovars. This Oryza sativa subsp. japonica (Rice) protein is Disease resistance protein RGA5.